The following is a 97-amino-acid chain: DNA-binding protein NEQ150 (97 aa).

Belongs to the PDCD5 family.

The protein is DNA-binding protein NEQ150 of Nanoarchaeum equitans (strain Kin4-M).